A 236-amino-acid polypeptide reads, in one-letter code: Small ribosomal subunit protein uS3 (236 aa).

One can recognise a KH type-2 domain in the interval 39–107 (IRSYVLEELR…ETSLNIVEIR (69 aa)). The interval 214 to 236 (ASERRATEADQSGSSSNRRRENA) is disordered.

The protein belongs to the universal ribosomal protein uS3 family. As to quaternary structure, part of the 30S ribosomal subunit. Forms a tight complex with proteins S10 and S14.

In terms of biological role, binds the lower part of the 30S subunit head. Binds mRNA in the 70S ribosome, positioning it for translation. This is Small ribosomal subunit protein uS3 from Bartonella tribocorum (strain CIP 105476 / IBS 506).